The following is a 273-amino-acid chain: HMP-PP phosphatase (273 aa).

Catalysis depends on D8, which acts as the Nucleophile. The Mg(2+) site is built by D8, D10, and D212.

It belongs to the HAD-like hydrolase superfamily. Cof family. The cofactor is Mg(2+).

It carries out the reaction 4-amino-2-methyl-5-(diphosphooxymethyl)pyrimidine + H2O = 4-amino-2-methyl-5-(phosphooxymethyl)pyrimidine + phosphate + H(+). Catalyzes the hydrolysis of 4-amino-2-methyl-5-hydroxymethylpyrimidine pyrophosphate (HMP-PP) to 4-amino-2-methyl-5-hydroxymethylpyrimidine phosphate (HMP-P). The chain is HMP-PP phosphatase from Yersinia pseudotuberculosis serotype I (strain IP32953).